Reading from the N-terminus, the 428-residue chain is Gamma-glutamyl phosphate reductase (428 aa).

This sequence belongs to the gamma-glutamyl phosphate reductase family.

It is found in the cytoplasm. It catalyses the reaction L-glutamate 5-semialdehyde + phosphate + NADP(+) = L-glutamyl 5-phosphate + NADPH + H(+). The protein operates within amino-acid biosynthesis; L-proline biosynthesis; L-glutamate 5-semialdehyde from L-glutamate: step 2/2. Its function is as follows. Catalyzes the NADPH-dependent reduction of L-glutamate 5-phosphate into L-glutamate 5-semialdehyde and phosphate. The product spontaneously undergoes cyclization to form 1-pyrroline-5-carboxylate. The sequence is that of Gamma-glutamyl phosphate reductase from Anaeromyxobacter sp. (strain Fw109-5).